The chain runs to 151 residues: Nucleoside diphosphate kinase (151 aa).

Positions 11, 59, 87, 93, 104, and 114 each coordinate ATP. Residue His-117 is the Pros-phosphohistidine intermediate of the active site.

The protein belongs to the NDK family. As to quaternary structure, homotetramer. Requires Mg(2+) as cofactor.

Its subcellular location is the cytoplasm. The catalysed reaction is a 2'-deoxyribonucleoside 5'-diphosphate + ATP = a 2'-deoxyribonucleoside 5'-triphosphate + ADP. The enzyme catalyses a ribonucleoside 5'-diphosphate + ATP = a ribonucleoside 5'-triphosphate + ADP. Major role in the synthesis of nucleoside triphosphates other than ATP. The ATP gamma phosphate is transferred to the NDP beta phosphate via a ping-pong mechanism, using a phosphorylated active-site intermediate. The sequence is that of Nucleoside diphosphate kinase from Prochlorococcus marinus (strain MIT 9211).